The sequence spans 210 residues: Ribosomal RNA small subunit methyltransferase G (210 aa).

Residues Gly74, Phe79, 127 to 128 (IE), and Arg143 each bind S-adenosyl-L-methionine.

The protein belongs to the methyltransferase superfamily. RNA methyltransferase RsmG family.

Its subcellular location is the cytoplasm. The enzyme catalyses guanosine(527) in 16S rRNA + S-adenosyl-L-methionine = N(7)-methylguanosine(527) in 16S rRNA + S-adenosyl-L-homocysteine. In terms of biological role, specifically methylates the N7 position of guanine in position 527 of 16S rRNA. The chain is Ribosomal RNA small subunit methyltransferase G from Chelativorans sp. (strain BNC1).